Reading from the N-terminus, the 503-residue chain is GTPase Obg (503 aa).

The Obg domain maps to 2–159 (PQFVDRVVLH…KDVILELKSM (158 aa)). The OBG-type G domain occupies 160–340 (ADVGLVGFPS…LKYALMDIVK (181 aa)). Residues 166 to 173 (GFPSAGKS), 191 to 195 (FTTLV), 212 to 215 (DVPG), 292 to 295 (NKMD), and 321 to 323 (STV) contribute to the GTP site. The Mg(2+) site is built by serine 173 and threonine 193. Residues 371-444 (EFEVEADPSA…IGEITFEWDP (74 aa)) enclose the OCT domain. Residues 457 to 476 (RGTDVRLEQNTRATPEERKR) are compositionally biased toward basic and acidic residues. Positions 457 to 503 (RGTDVRLEQNTRATPEERKRASQARRGLIDENDFGDGEVAERERWQG) are disordered.

The protein belongs to the TRAFAC class OBG-HflX-like GTPase superfamily. OBG GTPase family. As to quaternary structure, monomer. Mg(2+) serves as cofactor.

It is found in the cytoplasm. Its function is as follows. An essential GTPase which binds GTP, GDP and possibly (p)ppGpp with moderate affinity, with high nucleotide exchange rates and a fairly low GTP hydrolysis rate. Plays a role in control of the cell cycle, stress response, ribosome biogenesis and in those bacteria that undergo differentiation, in morphogenesis control. The protein is GTPase Obg of Corynebacterium jeikeium (strain K411).